Here is a 126-residue protein sequence, read N- to C-terminus: UPF0325 protein VFMJ11_2099 (126 aa).

Belongs to the UPF0325 family.

This Aliivibrio fischeri (strain MJ11) (Vibrio fischeri) protein is UPF0325 protein VFMJ11_2099.